We begin with the raw amino-acid sequence, 145 residues long: 3-dehydroquinate dehydratase (145 aa).

The Proton acceptor role is filled by tyrosine 24. Substrate contacts are provided by asparagine 76, histidine 82, and aspartate 89. Histidine 102 functions as the Proton donor in the catalytic mechanism. Substrate contacts are provided by residues 103–104 and arginine 113; that span reads VS.

Belongs to the type-II 3-dehydroquinase family. Homododecamer.

The enzyme catalyses 3-dehydroquinate = 3-dehydroshikimate + H2O. The protein operates within metabolic intermediate biosynthesis; chorismate biosynthesis; chorismate from D-erythrose 4-phosphate and phosphoenolpyruvate: step 3/7. Functionally, catalyzes a trans-dehydration via an enolate intermediate. The polypeptide is 3-dehydroquinate dehydratase (Herminiimonas arsenicoxydans).